The following is a 365-amino-acid chain: Ribosomal RNA large subunit methyltransferase M (365 aa).

S-adenosyl-L-methionine contacts are provided by residues serine 194, 227 to 230 (CPGG), aspartate 246, aspartate 266, and aspartate 284. Catalysis depends on lysine 313, which acts as the Proton acceptor.

Belongs to the class I-like SAM-binding methyltransferase superfamily. RNA methyltransferase RlmE family. RlmM subfamily. As to quaternary structure, monomer.

It is found in the cytoplasm. It catalyses the reaction cytidine(2498) in 23S rRNA + S-adenosyl-L-methionine = 2'-O-methylcytidine(2498) in 23S rRNA + S-adenosyl-L-homocysteine + H(+). Catalyzes the 2'-O-methylation at nucleotide C2498 in 23S rRNA. In Pasteurella multocida (strain Pm70), this protein is Ribosomal RNA large subunit methyltransferase M.